An 896-amino-acid polypeptide reads, in one-letter code: Desmocollin-3 (896 aa).

Residues 1-31 (MVVPEFRSPQCRALCTKLLLTLWVFSFVGEA) form the signal peptide. Positions 32-135 (CKKVTFHVPS…KETVLRRSKR (104 aa)) are excised as a propeptide. Cadherin domains are found at residues 136–243 (RWAP…YPLF), 244–355 (TEAI…APTF), 356–472 (RQNT…GPEC), 473–580 (KPPE…EIIQ), and 581–691 (DYIV…TLGK). Topologically, residues 136–695 (RWAPIPCSMQ…GITLGKWAIL (560 aa)) are extracellular. The N-linked (GlcNAc...) asparagine glycan is linked to asparagine 166. N-linked (GlcNAc...) asparagine glycans are attached at residues asparagine 392 and asparagine 547. A glycan (N-linked (GlcNAc...) (high mannose) asparagine) is linked at asparagine 630. A helical transmembrane segment spans residues 696 to 716 (AILLGIALLFSVLLTLVCGVV). Over 717–896 (TARKGKHFPE…LTLAETCTKR (180 aa)) the chain is Cytoplasmic.

May form homodimers. Interacts with DSG1; there is evidence to suggest that the interaction promotes cell-cell adhesion of keratinocytes. As to expression, expressed in the basal layers of epidermal stratified epithelia from birth (at protein level).

It is found in the cell membrane. The protein localises to the cell junction. It localises to the desmosome. Its subcellular location is the cytoplasm. A component of desmosome cell-cell junctions which are required for positive regulation of cellular adhesion. Required for cell-cell adhesion in the epidermis, as a result required for the maintenance of the dermal cohesion and the dermal barrier function. Required for cell-cell adhesion of epithelial cell layers surrounding the telogen hair club, as a result plays an important role in telogen hair shaft anchorage. Essential for successful completion of embryo compaction and development beyond the 8-cell stage. This is Desmocollin-3 (Dsc3) from Mus musculus (Mouse).